Reading from the N-terminus, the 338-residue chain is Lipoate-protein ligase A (338 aa).

Positions 29-216 constitute a BPL/LPL catalytic domain; that stretch reads PATQRVLFLW…AFFAHYGERV (188 aa). ATP is bound by residues Arg71, 76 to 79, and Lys134; that span reads GAVF. Residue Lys134 participates in (R)-lipoate binding.

This sequence belongs to the LplA family. Monomer.

The protein localises to the cytoplasm. The enzyme catalyses L-lysyl-[lipoyl-carrier protein] + (R)-lipoate + ATP = N(6)-[(R)-lipoyl]-L-lysyl-[lipoyl-carrier protein] + AMP + diphosphate + H(+). The protein operates within protein modification; protein lipoylation via exogenous pathway; protein N(6)-(lipoyl)lysine from lipoate: step 1/2. Its pathway is protein modification; protein lipoylation via exogenous pathway; protein N(6)-(lipoyl)lysine from lipoate: step 2/2. In terms of biological role, catalyzes both the ATP-dependent activation of exogenously supplied lipoate to lipoyl-AMP and the transfer of the activated lipoyl onto the lipoyl domains of lipoate-dependent enzymes. This chain is Lipoate-protein ligase A, found in Escherichia coli (strain K12 / MC4100 / BW2952).